The primary structure comprises 335 residues: Holliday junction branch migration complex subunit RuvB (335 aa).

The tract at residues 1 to 181 is large ATPase domain (RuvB-L); sequence MDRIVEIEKY…FGMQFRLEFY (181 aa). ATP is bound by residues Leu20, Arg21, Gly62, Lys65, Thr66, Thr67, 128–130, Arg171, Tyr181, and Arg218; that span reads EDY. Thr66 is a binding site for Mg(2+). The interval 182-252 is small ATPAse domain (RuvB-S); it reads KDSELALILQ…RANEALNSLG (71 aa). The head domain (RuvB-H) stretch occupies residues 255–335; it reads ELGFDAMDLR…LNYEKTLFEE (81 aa). Residues Arg309 and Arg314 each coordinate DNA.

Belongs to the RuvB family. As to quaternary structure, homohexamer. Forms an RuvA(8)-RuvB(12)-Holliday junction (HJ) complex. HJ DNA is sandwiched between 2 RuvA tetramers; dsDNA enters through RuvA and exits via RuvB. An RuvB hexamer assembles on each DNA strand where it exits the tetramer. Each RuvB hexamer is contacted by two RuvA subunits (via domain III) on 2 adjacent RuvB subunits; this complex drives branch migration. In the full resolvosome a probable DNA-RuvA(4)-RuvB(12)-RuvC(2) complex forms which resolves the HJ.

Its subcellular location is the cytoplasm. The catalysed reaction is ATP + H2O = ADP + phosphate + H(+). In terms of biological role, the RuvA-RuvB-RuvC complex processes Holliday junction (HJ) DNA during genetic recombination and DNA repair, while the RuvA-RuvB complex plays an important role in the rescue of blocked DNA replication forks via replication fork reversal (RFR). RuvA specifically binds to HJ cruciform DNA, conferring on it an open structure. The RuvB hexamer acts as an ATP-dependent pump, pulling dsDNA into and through the RuvAB complex. RuvB forms 2 homohexamers on either side of HJ DNA bound by 1 or 2 RuvA tetramers; 4 subunits per hexamer contact DNA at a time. Coordinated motions by a converter formed by DNA-disengaged RuvB subunits stimulates ATP hydrolysis and nucleotide exchange. Immobilization of the converter enables RuvB to convert the ATP-contained energy into a lever motion, pulling 2 nucleotides of DNA out of the RuvA tetramer per ATP hydrolyzed, thus driving DNA branch migration. The RuvB motors rotate together with the DNA substrate, which together with the progressing nucleotide cycle form the mechanistic basis for DNA recombination by continuous HJ branch migration. Branch migration allows RuvC to scan DNA until it finds its consensus sequence, where it cleaves and resolves cruciform DNA. This chain is Holliday junction branch migration complex subunit RuvB, found in Campylobacter jejuni (strain RM1221).